Here is a 397-residue protein sequence, read N- to C-terminus: UDP-galactose translocator (397 aa).

The tract at residues 1–21 is disordered; it reads MAAVGSGGSNAAAGPGAVSAG. Helical transmembrane passes span 3–23, 37–57, 65–85, 97–117, 140–160, 169–189, 200–220, 238–258, 269–289, and 315–335; these read AVGS…AGSL, YISL…IRYA, FFAT…CLLL, LALF…KLAV, TFQV…VLML, WASL…QAGG, GAGL…GVYF, LGLF…GTAV, PAVW…AVVV, and LFGF…IGAV. A compositionally biased stretch (low complexity) spans 9 to 21; that stretch reads SNAAAGPGAVSAG. The interval 355–397 is disordered; it reads ASASTSGPCTHQQPPGQPPPPKLSSHRADLSTEPFLPKSVLVK.

This sequence belongs to the nucleotide-sugar transporter family. SLC35A subfamily. In terms of assembly, interacts with SLC35A3; the interaction is reduced in the presence of SLC35A4. Found in a complex with SLC35A3 and SLC35A4.

The protein localises to the golgi apparatus membrane. The enzyme catalyses UMP(out) + UDP-alpha-D-galactose(in) = UMP(in) + UDP-alpha-D-galactose(out). The catalysed reaction is UDP-N-acetyl-alpha-D-galactosamine(in) + UMP(out) = UDP-N-acetyl-alpha-D-galactosamine(out) + UMP(in). It catalyses the reaction UMP(out) + UDP-alpha-D-glucose(in) = UMP(in) + UDP-alpha-D-glucose(out). It carries out the reaction UMP(out) + UDP-N-acetyl-alpha-D-glucosamine(in) = UMP(in) + UDP-N-acetyl-alpha-D-glucosamine(out). The enzyme catalyses UDP-alpha-D-galactose(in) + AMP(out) = UDP-alpha-D-galactose(out) + AMP(in). The catalysed reaction is UDP-alpha-D-galactose(in) + CMP(out) = UDP-alpha-D-galactose(out) + CMP(in). It catalyses the reaction UDP-N-acetyl-alpha-D-galactosamine(out) + UDP-alpha-D-galactose(in) = UDP-N-acetyl-alpha-D-galactosamine(in) + UDP-alpha-D-galactose(out). It carries out the reaction UDP-N-acetyl-alpha-D-glucosamine(out) + UDP-alpha-D-galactose(in) = UDP-N-acetyl-alpha-D-glucosamine(in) + UDP-alpha-D-galactose(out). The enzyme catalyses UDP-alpha-D-galactose(in) + UDP-alpha-D-glucose(out) = UDP-alpha-D-galactose(out) + UDP-alpha-D-glucose(in). The catalysed reaction is UMP(out) + CMP(in) = UMP(in) + CMP(out). It catalyses the reaction UMP(out) + AMP(in) = UMP(in) + AMP(out). Transports uridine diphosphate galactose (UDP-galactose) from the cytosol into the Golgi apparatus, functioning as an antiporter that exchanges UDP-galactose for UMP. It is also able to exchange UDP-galactose for AMP and CMP, and to transport UDP-N-acetylgalactosamine (UDP-GalNAc) and other nucleotide sugars. As a provider of UDP-galactose to galactosyltransferases present in the Golgi apparatus, it is necessary for globotriaosylceramide/globoside (Gb3Cer) synthesis from lactosylceramide. This Canis lupus familiaris (Dog) protein is UDP-galactose translocator.